Reading from the N-terminus, the 859-residue chain is Envelope glycoprotein (859 aa).

Positions 1 to 6 (MVSIAF) are excised as a propeptide. At 7–614 (YGGIPGGIST…KDLWSHIGNW (608 aa)) the chain is on the extracellular side. Asparagine 40, asparagine 112, asparagine 141, asparagine 148, asparagine 186, asparagine 214, asparagine 233, asparagine 244, asparagine 340, asparagine 368, asparagine 399, asparagine 406, and asparagine 411 each carry an N-linked (GlcNAc...) asparagine; by host glycan. Residues 446 to 466 (FGISAIVAAIVAATAIAASAT) are fusion peptide. N-linked (GlcNAc...) asparagine; by host glycosylation is found at asparagine 483 and asparagine 490. An immunosuppression region spans residues 498-513 (LIERQIKILYAMILQT). N-linked (GlcNAc...) asparagine; by host glycans are attached at residues asparagine 550 and asparagine 557. Coiled coils occupy residues 576-624 (ILTT…SIIK) and 663-699 (KKFH…YYKQ). A helical transmembrane segment spans residues 615–635 (IPGLGASIIKYIVMFLLIYLL). Topologically, residues 636 to 859 (LTSSPKILRA…TSHVSMPQYV (224 aa)) are cytoplasmic.

The mature envelope protein (Env) consists of a trimer of SU-TM heterodimers attached by noncovalent interactions or by a labile interchain disulfide bond. Specific enzymatic cleavages in vivo yield mature proteins. Envelope glycoproteins are synthesized as an inactive precursor that is N-glycosylated and processed likely by host cell furin or by a furin-like protease in the Golgi to yield the mature SU and TM proteins. The cleavage site between SU and TM requires the minimal sequence [KR]-X-[KR]-R.

The protein resides in the virion membrane. Its subcellular location is the host cell membrane. Functionally, the surface protein (SU) attaches the virus to the host cell by binding to its receptor. This interaction triggers the refolding of the transmembrane protein (TM) and is thought to activate its fusogenic potential by unmasking its fusion peptide. Fusion occurs at the host cell plasma membrane. Its function is as follows. The transmembrane protein (TM) acts as a class I viral fusion protein. Under the current model, the protein has at least 3 conformational states: pre-fusion native state, pre-hairpin intermediate state, and post-fusion hairpin state. During viral and target cell membrane fusion, the coiled coil regions (heptad repeats) assume a trimer-of-hairpins structure, positioning the fusion peptide in close proximity to the C-terminal region of the ectodomain. The formation of this structure appears to drive apposition and subsequent fusion of viral and target cell membranes. Membranes fusion leads to delivery of the nucleocapsid into the cytoplasm. The protein is Envelope glycoprotein (env) of Equus asinus (Donkey).